The primary structure comprises 517 residues: Bifunctional purine biosynthesis protein PurH (517 aa).

The MGS-like domain occupies 1–146 (MKRLALLSTS…KNFAHLTVLC (146 aa)).

It belongs to the PurH family.

The catalysed reaction is (6R)-10-formyltetrahydrofolate + 5-amino-1-(5-phospho-beta-D-ribosyl)imidazole-4-carboxamide = 5-formamido-1-(5-phospho-D-ribosyl)imidazole-4-carboxamide + (6S)-5,6,7,8-tetrahydrofolate. It catalyses the reaction IMP + H2O = 5-formamido-1-(5-phospho-D-ribosyl)imidazole-4-carboxamide. Its pathway is purine metabolism; IMP biosynthesis via de novo pathway; 5-formamido-1-(5-phospho-D-ribosyl)imidazole-4-carboxamide from 5-amino-1-(5-phospho-D-ribosyl)imidazole-4-carboxamide (10-formyl THF route): step 1/1. It functions in the pathway purine metabolism; IMP biosynthesis via de novo pathway; IMP from 5-formamido-1-(5-phospho-D-ribosyl)imidazole-4-carboxamide: step 1/1. This chain is Bifunctional purine biosynthesis protein PurH, found in Trichodesmium erythraeum (strain IMS101).